A 146-amino-acid chain; its full sequence is 3-hydroxyacyl-[acyl-carrier-protein] dehydratase FabZ (146 aa).

Histidine 47 is a catalytic residue.

It belongs to the thioester dehydratase family. FabZ subfamily.

It is found in the cytoplasm. The enzyme catalyses a (3R)-hydroxyacyl-[ACP] = a (2E)-enoyl-[ACP] + H2O. In terms of biological role, involved in unsaturated fatty acids biosynthesis. Catalyzes the dehydration of short chain beta-hydroxyacyl-ACPs and long chain saturated and unsaturated beta-hydroxyacyl-ACPs. The sequence is that of 3-hydroxyacyl-[acyl-carrier-protein] dehydratase FabZ from Nitrosospira multiformis (strain ATCC 25196 / NCIMB 11849 / C 71).